Here is a 693-residue protein sequence, read N- to C-terminus: Polyribonucleotide nucleotidyltransferase (693 aa).

D486 and D492 together coordinate Mg(2+). A KH domain is found at 553–612 (PRFSSMRIDTEKIKDVIGKGGATIRSITEQTGTTIEIEDDGSVKIAATDKAAAANARRLI). One can recognise an S1 motif domain in the interval 622 to 690 (GRIYDAKVTK…RQGRVRLSIK (69 aa)).

The protein belongs to the polyribonucleotide nucleotidyltransferase family. As to quaternary structure, component of the RNA degradosome, which is a multiprotein complex involved in RNA processing and mRNA degradation. Mg(2+) serves as cofactor.

It localises to the cytoplasm. The catalysed reaction is RNA(n+1) + phosphate = RNA(n) + a ribonucleoside 5'-diphosphate. In terms of biological role, involved in mRNA degradation. Catalyzes the phosphorolysis of single-stranded polyribonucleotides processively in the 3'- to 5'-direction. This chain is Polyribonucleotide nucleotidyltransferase, found in Dichelobacter nodosus (strain VCS1703A).